Consider the following 277-residue polypeptide: Tryptophan synthase alpha chain (277 aa).

Catalysis depends on proton acceptor residues Glu43 and Glu54.

Belongs to the TrpA family. As to quaternary structure, tetramer of two alpha and two beta chains.

It catalyses the reaction (1S,2R)-1-C-(indol-3-yl)glycerol 3-phosphate + L-serine = D-glyceraldehyde 3-phosphate + L-tryptophan + H2O. It participates in amino-acid biosynthesis; L-tryptophan biosynthesis; L-tryptophan from chorismate: step 5/5. The alpha subunit is responsible for the aldol cleavage of indoleglycerol phosphate to indole and glyceraldehyde 3-phosphate. In Haloferax volcanii (strain ATCC 29605 / DSM 3757 / JCM 8879 / NBRC 14742 / NCIMB 2012 / VKM B-1768 / DS2) (Halobacterium volcanii), this protein is Tryptophan synthase alpha chain.